Consider the following 1151-residue polypeptide: MFNQEKGTDYPILNIQELEALADLKLSAMGKEYPKHDKSDAIDVVAPLVDIIAEGDQESTAPIDARLQTFLNSYFAECGEEVPKIPDNTFILDREGLGRVLSFPPHKQEFFCETMKSYKIKQGVLHNPAKDKRTTVGVFHICQSDVPVPADKIECPKIAFLRMLKAAFYGAPDDHLIIPYTAECKEPTRSWVSLYMRPVVVPGVKGVKGFEHEKATEMHFFVPGNMVSCLDFVESVFGNAGNPRLSKNDAALDPLGWTGHSGMAILAPHLTRMTKKECGLPHISQATERQKRERMCWEKEDELYNDGKTFKMYCRDASGVICTIIADNYFGYCKKEVKTQISYSANLYGFAEEEHAGGAVTRPSYDLGEACKAVQYAEGYKFSEMVEKNKHSIIVKEEGYAVDKKYPEGIIYVPEDSVFTIEDASIKFNHNGKEESILLTPKVNYVLPNGYTIILHDTMTSRRWTLRGILPQYTLCHKPCTVSGGGKSEISKNISDAIFEGKMFVNNKEEEFKAVQKVFDHDFSRRYADGEIKSAHILDPNVTLGTVVKMLTPSSFFTEEHNEFVAAIPPMIVELALTIKSLYREEWKGDWQSRITVDKINGKEGHELKYRKMPLPSQYLRVGFERDETTWRVFQLRKDFFPAAKLQMEDDITASVIVPTKLLKTPINTNGKKACKIVKNCELRLFQRPDDAVFRGYDKQTEYDFSIPGHFISNYQPMTREEAKDFTKDVVRLYQYTEPMRKCLQDFVAGKDEAKYIVSSSHTRLVQDGDKLVGSKNPRYLQRRPDMLDPEYTYMTFKAIQLFRKISDEEPLYTPVDAVLSGRRNNPPQVAKNGMKLRPLSVFAPLHYFELPELLMECITSMTGASPSMFGAGSEGALTKGPFNSLPAVVDLNNYLLGMICCGYSGFVSSASYCGPHYKVAHDISLLIPEIWSRMRRYEQEPKYLIEHGYLEPCPDVTYNGKTYSGKRLGYRITKDFTVHYFSSIFSVPNSVMPEDFLKPELQDLAIYADSYEYIEQTDKGIAMNYVKDGTVEGACPPLKALIYIMANGEYNGMTRESKEFREMFDAKTILNSEWYKERLVTRQKLEVAKLNKDLAYLNKTIAEKPRLAETLNKQIAAVKEELQYVSSEEYLIDIDGSIGTDPYPYKCMKH.

A coiled-coil region spans residues 1083–1129 (RQKLEVAKLNKDLAYLNKTIAEKPRLAETLNKQIAAVKEELQYVSSE).

The protein belongs to the PPi-type phosphoenolpyruvate carboxykinase family. Monomer and trimer; forms heterotrimers with PEPCK2 and PEPCK3.

It localises to the cytoplasm. The protein resides in the cytosol. The catalysed reaction is oxaloacetate + diphosphate = phosphoenolpyruvate + phosphate + CO2. Functionally, inorganic pyrophosphate (PPi)-dependent phosphoenolpyruvate carboxykinase, which regulates the carbon flow of the central metabolism by fixing CO(2) to phosphoenolpyruvate to produce oxaloacetate. Can also produce pyruvate and diphosphate from phosphoenolpyruvate and phosphate. The sequence is that of PPi-type phosphoenolpyruvate carboxykinase 1 from Entamoeba histolytica (strain ATCC 30459 / HM-1:IMSS / ABRM).